The chain runs to 99 residues: Nucleoid-associated protein EbfC (99 aa).

It belongs to the YbaB/EbfC family. In terms of assembly, homodimer.

It localises to the cytoplasm. The protein localises to the nucleoid. Its function is as follows. Binds to DNA and alters its conformation. May be involved in regulation of gene expression, nucleoid organization and DNA protection. The polypeptide is Nucleoid-associated protein EbfC (Borrelia hermsii (strain HS1 / DAH)).